The chain runs to 100 residues: Cytochrome b (100 aa).

3 consecutive transmembrane segments (helical) span residues 1 to 21 (MGSLLGLCLIVQIITGLFLAM), 45 to 66 (WLIRNFHANGASLFFICIYLHI), and 81 to 100 (WNIGVILLLLTMMTAFVGYV). The heme b site is built by His-51 and His-65.

Belongs to the cytochrome b family. The cytochrome bc1 complex contains 3 respiratory subunits (MT-CYB, CYC1 and UQCRFS1), 2 core proteins (UQCRC1 and UQCRC2) and probably 6 low-molecular weight proteins. Heme b serves as cofactor.

The protein resides in the mitochondrion inner membrane. Functionally, component of the ubiquinol-cytochrome c reductase complex (complex III or cytochrome b-c1 complex) that is part of the mitochondrial respiratory chain. The b-c1 complex mediates electron transfer from ubiquinol to cytochrome c. Contributes to the generation of a proton gradient across the mitochondrial membrane that is then used for ATP synthesis. This chain is Cytochrome b (mt-cyb), found in Polypterus sp. (Bichir).